Here is a 529-residue protein sequence, read N- to C-terminus: Bifunctional purine biosynthesis protein PurH (529 aa).

The region spanning 1–148 (MQQRRPVRRA…KNHKDVAIVV (148 aa)) is the MGS-like domain.

This sequence belongs to the PurH family.

The catalysed reaction is (6R)-10-formyltetrahydrofolate + 5-amino-1-(5-phospho-beta-D-ribosyl)imidazole-4-carboxamide = 5-formamido-1-(5-phospho-D-ribosyl)imidazole-4-carboxamide + (6S)-5,6,7,8-tetrahydrofolate. It catalyses the reaction IMP + H2O = 5-formamido-1-(5-phospho-D-ribosyl)imidazole-4-carboxamide. It functions in the pathway purine metabolism; IMP biosynthesis via de novo pathway; 5-formamido-1-(5-phospho-D-ribosyl)imidazole-4-carboxamide from 5-amino-1-(5-phospho-D-ribosyl)imidazole-4-carboxamide (10-formyl THF route): step 1/1. Its pathway is purine metabolism; IMP biosynthesis via de novo pathway; IMP from 5-formamido-1-(5-phospho-D-ribosyl)imidazole-4-carboxamide: step 1/1. The polypeptide is Bifunctional purine biosynthesis protein PurH (Salmonella paratyphi C (strain RKS4594)).